We begin with the raw amino-acid sequence, 962 residues long: Glycine dehydrogenase (decarboxylating) (962 aa).

Lys709 bears the N6-(pyridoxal phosphate)lysine mark.

This sequence belongs to the GcvP family. As to quaternary structure, the glycine cleavage system is composed of four proteins: P, T, L and H. It depends on pyridoxal 5'-phosphate as a cofactor.

The catalysed reaction is N(6)-[(R)-lipoyl]-L-lysyl-[glycine-cleavage complex H protein] + glycine + H(+) = N(6)-[(R)-S(8)-aminomethyldihydrolipoyl]-L-lysyl-[glycine-cleavage complex H protein] + CO2. The glycine cleavage system catalyzes the degradation of glycine. The P protein binds the alpha-amino group of glycine through its pyridoxal phosphate cofactor; CO(2) is released and the remaining methylamine moiety is then transferred to the lipoamide cofactor of the H protein. In Shewanella baltica (strain OS223), this protein is Glycine dehydrogenase (decarboxylating).